The sequence spans 449 residues: Phosphoglucosamine mutase (449 aa).

S101 acts as the Phosphoserine intermediate in catalysis. Mg(2+) contacts are provided by S101, D240, D242, and D244. S101 bears the Phosphoserine mark.

Belongs to the phosphohexose mutase family. Mg(2+) serves as cofactor. In terms of processing, activated by phosphorylation.

The enzyme catalyses alpha-D-glucosamine 1-phosphate = D-glucosamine 6-phosphate. In terms of biological role, catalyzes the conversion of glucosamine-6-phosphate to glucosamine-1-phosphate. The polypeptide is Phosphoglucosamine mutase (Streptococcus suis (strain 98HAH33)).